A 185-amino-acid chain; its full sequence is Photosystem I assembly protein Ycf4 (185 aa).

2 consecutive transmembrane segments (helical) span residues Tyr24–Ser44 and Ile66–Val86.

It belongs to the Ycf4 family.

It is found in the cellular thylakoid membrane. In terms of biological role, seems to be required for the assembly of the photosystem I complex. In Prochlorococcus marinus (strain AS9601), this protein is Photosystem I assembly protein Ycf4.